We begin with the raw amino-acid sequence, 536 residues long: Light-independent protochlorophyllide reductase subunit B (536 aa).

A [4Fe-4S] cluster-binding site is contributed by aspartate 36. The active-site Proton donor is the aspartate 274. 409 to 410 (GL) is a binding site for substrate. The segment at 426-448 (DEAGPSHHGGKAVPASAPRADEA) is disordered.

The protein belongs to the ChlB/BchB/BchZ family. In terms of assembly, protochlorophyllide reductase is composed of three subunits; BchL, BchN and BchB. Forms a heterotetramer of two BchB and two BchN subunits. The cofactor is [4Fe-4S] cluster.

The enzyme catalyses chlorophyllide a + oxidized 2[4Fe-4S]-[ferredoxin] + 2 ADP + 2 phosphate = protochlorophyllide a + reduced 2[4Fe-4S]-[ferredoxin] + 2 ATP + 2 H2O. The protein operates within porphyrin-containing compound metabolism; bacteriochlorophyll biosynthesis (light-independent). Component of the dark-operative protochlorophyllide reductase (DPOR) that uses Mg-ATP and reduced ferredoxin to reduce ring D of protochlorophyllide (Pchlide) to form chlorophyllide a (Chlide). This reaction is light-independent. The NB-protein (BchN-BchB) is the catalytic component of the complex. The polypeptide is Light-independent protochlorophyllide reductase subunit B (Cereibacter sphaeroides (strain KD131 / KCTC 12085) (Rhodobacter sphaeroides)).